A 241-amino-acid polypeptide reads, in one-letter code: uncharacterized protein (241 aa).

The protein localises to the cytoplasm. The protein resides in the nucleus. This is an uncharacterized protein from Schizosaccharomyces pombe (strain 972 / ATCC 24843) (Fission yeast).